Reading from the N-terminus, the 177-residue chain is ATP synthase subunit delta (177 aa).

The protein belongs to the ATPase delta chain family. As to quaternary structure, F-type ATPases have 2 components, F(1) - the catalytic core - and F(0) - the membrane proton channel. F(1) has five subunits: alpha(3), beta(3), gamma(1), delta(1), epsilon(1). F(0) has three main subunits: a(1), b(2) and c(10-14). The alpha and beta chains form an alternating ring which encloses part of the gamma chain. F(1) is attached to F(0) by a central stalk formed by the gamma and epsilon chains, while a peripheral stalk is formed by the delta and b chains.

It localises to the cell inner membrane. Its function is as follows. F(1)F(0) ATP synthase produces ATP from ADP in the presence of a proton or sodium gradient. F-type ATPases consist of two structural domains, F(1) containing the extramembraneous catalytic core and F(0) containing the membrane proton channel, linked together by a central stalk and a peripheral stalk. During catalysis, ATP synthesis in the catalytic domain of F(1) is coupled via a rotary mechanism of the central stalk subunits to proton translocation. This protein is part of the stalk that links CF(0) to CF(1). It either transmits conformational changes from CF(0) to CF(1) or is implicated in proton conduction. This Proteus mirabilis (strain HI4320) protein is ATP synthase subunit delta.